The following is a 512-amino-acid chain: Glutathione-binding protein GsiB (512 aa).

The N-terminal stretch at 1-26 (MARAVHRSGLVALGIATALMASCAFA) is a signal peptide.

Belongs to the bacterial solute-binding protein 5 family. As to quaternary structure, the complex is composed of two ATP-binding proteins (GsiA), two transmembrane proteins (GsiC and GsiD) and a solute-binding protein (GsiB).

It localises to the periplasm. Its function is as follows. Part of the ABC transporter complex GsiABCD involved in glutathione import. Binds glutathione. This chain is Glutathione-binding protein GsiB, found in Shigella flexneri.